The following is a 659-amino-acid chain: Exocyst complex component 5 (659 aa).

Residues 1–58 are a coiled coil; sequence MRFEEEIGSLQMLCDQFQNKINTLEKQMNEEKKDYVQKLHRLHEKNGEAIDKMKQLDH.

This sequence belongs to the SEC10 family. The exocyst complex is composed of sec-3/exoc1, sec-5/exoc2, sec-6/exoc3, sec-8/exoc4, sec-10/exoc5, sec-15/exoc6, exo-70/exoc7 and exo-84/exoc8.

Functionally, component of the exocyst complex involved in the docking of exocytic vesicles with fusion sites on the plasma membrane. The polypeptide is Exocyst complex component 5 (sec-10) (Caenorhabditis elegans).